A 21-amino-acid chain; its full sequence is Apolipophorin 2 (21 aa).

As to expression, expressed in hemolymph.

Its subcellular location is the secreted. In terms of biological role, constitutes the major component of lipophorin, which mediates transport for various types of lipids in hemolymph. Acts by forming lipoprotein particles that bind lipoproteins and lipids. In Galleria mellonella (Greater wax moth), this protein is Apolipophorin 2.